The chain runs to 59 residues: Large ribosomal subunit protein uL30 (59 aa).

This sequence belongs to the universal ribosomal protein uL30 family. Part of the 50S ribosomal subunit.

The sequence is that of Large ribosomal subunit protein uL30 from Bacillus subtilis (strain 168).